The following is a 143-amino-acid chain: Transcriptional regulator MraZ (143 aa).

2 consecutive SpoVT-AbrB domains span residues 5–47 (EFDH…TLEE) and 76–119 (AVEV…DRET).

It belongs to the MraZ family. Forms oligomers.

Its subcellular location is the cytoplasm. It is found in the nucleoid. The polypeptide is Transcriptional regulator MraZ (Staphylococcus epidermidis (strain ATCC 35984 / DSM 28319 / BCRC 17069 / CCUG 31568 / BM 3577 / RP62A)).